We begin with the raw amino-acid sequence, 430 residues long: Anaerobic glycerol-3-phosphate dehydrogenase subunit B (430 aa).

This sequence belongs to the anaerobic G-3-P dehydrogenase subunit B family. As to quaternary structure, composed of a catalytic GlpA/B dimer and of membrane bound GlpC. Requires FMN as cofactor.

It catalyses the reaction a quinone + sn-glycerol 3-phosphate = dihydroxyacetone phosphate + a quinol. The protein operates within polyol metabolism; glycerol degradation via glycerol kinase pathway; glycerone phosphate from sn-glycerol 3-phosphate (anaerobic route): step 1/1. Its function is as follows. Conversion of glycerol 3-phosphate to dihydroxyacetone. Uses fumarate or nitrate as electron acceptor. The chain is Anaerobic glycerol-3-phosphate dehydrogenase subunit B from Actinobacillus succinogenes (strain ATCC 55618 / DSM 22257 / CCUG 43843 / 130Z).